The chain runs to 414 residues: ORC1-type DNA replication protein 11 (414 aa).

Residues 60–64 (VGKTA), Tyr-207, and Arg-219 each bind ATP.

The protein belongs to the CDC6/cdc18 family.

Its function is as follows. Involved in regulation of DNA replication. The chain is ORC1-type DNA replication protein 11 (cdc6k) from Haloarcula marismortui (strain ATCC 43049 / DSM 3752 / JCM 8966 / VKM B-1809) (Halobacterium marismortui).